We begin with the raw amino-acid sequence, 638 residues long: Phenylethylamine oxidase (638 aa).

A propeptide spanning residues 1-2 is cleaved from the precursor; that stretch reads MT. 296 to 307 is a substrate binding site; it reads YFDTGEYLVGQY. The Proton acceptor role is filled by D298. Cysteines 317 and 343 form a disulfide. 379–384 is a substrate binding site; it reads IGNYDY. The Schiff-base intermediate with substrate; via topaquinone role is filled by Y382. Position 382 is a 2',4',5'-topaquinone (Y382). Cu cation is bound by residues H431, H433, and H592.

The protein belongs to the copper/topaquinone oxidase family. In terms of assembly, homodimer. The cofactor is Cu cation. Requires L-topaquinone as cofactor. Topaquinone (TPQ) is generated by copper-dependent autoxidation of a specific tyrosyl residue.

It carries out the reaction a primary methyl amine + O2 + H2O = an aldehyde + H2O2 + NH4(+). It catalyses the reaction 2-phenylethylamine + O2 + H2O = 2-phenylacetaldehyde + H2O2 + NH4(+). Functionally, catalyzes the oxidative deamination of phenylethylamine to phenylacetaldehyde with the concomitant production of hydrogen peroxide and ammonia. The sequence is that of Phenylethylamine oxidase from Arthrobacter globiformis.